The chain runs to 525 residues: GMP synthase [glutamine-hydrolyzing] (525 aa).

In terms of domain architecture, Glutamine amidotransferase type-1 spans Thr13–Thr202. Catalysis depends on Cys89, which acts as the Nucleophile. Active-site residues include His176 and Glu178. The GMPS ATP-PPase domain maps to Trp203–Arg400. Ser231–Thr237 provides a ligand contact to ATP. 4 residues coordinate XMP: Arg304, Asp462, Lys517, and Glu523.

As to quaternary structure, homodimer. It depends on Mg(2+) as a cofactor.

It localises to the cytoplasm. Its subcellular location is the cytosol. The catalysed reaction is XMP + L-glutamine + ATP + H2O = GMP + L-glutamate + AMP + diphosphate + 2 H(+). The protein operates within purine metabolism; GMP biosynthesis; GMP from XMP (L-Gln route): step 1/1. Catalyzes the conversion of xanthine monophosphate (XMP) to GMP in the presence of glutamine and ATP through an adenyl-XMP intermediate. The chain is GMP synthase [glutamine-hydrolyzing] (GUA1) from Eremothecium gossypii (strain ATCC 10895 / CBS 109.51 / FGSC 9923 / NRRL Y-1056) (Yeast).